Consider the following 592-residue polypeptide: Protein kinase C zeta type (592 aa).

Residues 15–98 enclose the PB1 domain; it reads RVRLKAHYGG…EGLIIHVFPS (84 aa). Positions 79–145 are interaction with SQSTM1; the sequence is AFRLARQCRD…KRFNRRAYCG (67 aa). A Phorbol-ester/DAG-type zinc finger spans residues 130 to 180; the sequence is GHLFQAKRFNRRAYCGQCSERIWGLARQGYRCINCKLLVHKRCHGLVPLTC. Positions 252 to 518 constitute a Protein kinase domain; it reads FDLIRVIGRG…FSDIKSHAFF (267 aa). ATP is bound by residues 258-266 and lysine 281; that span reads IGRGSYAKV. Aspartate 376 functions as the Proton acceptor in the catalytic mechanism. Threonine 410 is modified (phosphothreonine; by PDPK1 and PI3K). The region spanning 519 to 590 is the AGC-kinase C-terminal domain; the sequence is RSIDWDLLEK…INPLLLSTEE (72 aa). Threonine 560 is modified (phosphothreonine). Phosphoserine is present on serine 591.

It belongs to the protein kinase superfamily. AGC Ser/Thr protein kinase family. PKC subfamily. In terms of assembly, forms a ternary complex with SQSTM1 and KCNAB2. Forms another ternary complex with SQSTM1 and GABRR3. Forms a complex with SQSTM1 and MAP2K5. Interacts with PARD6A, PARD6B, PARD6G and SQSTM1. Part of a complex with PARD3, PARD6A or PARD6B or PARD6G and CDC42 or RAC1. Interacts with ADAP1/CENTA1. Forms a ternary complex composed of SQSTM1 and PAWR. Interacts directly with SQSTM1. Interacts with IKBKB. Interacts (via the protein kinase domain) with WWC1. Forms a tripartite complex with WWC1 and DDR1, but predominantly in the absence of collagen. Component of the Par polarity complex, composed of at least phosphorylated PRKCZ, PARD3 and TIAM1. Interacts with PDPK1 (via N-terminal region). Interacts with WDFY2 (via WD repeats 1-3). Interacts with VAMP2. Forms a complex with WDFY2 and VAMP2. Interacts with APPL1. Interacts with WWC1, WWC2 and WWC3. In terms of processing, CDH5 is required for its phosphorylation at Thr-410. Phosphorylated by protein kinase PDPK1; phosphorylation is inhibited by the apoptotic C-terminal cleavage product of PKN2. Phosphorylation at Thr-410 by PI3K activates the kinase. As to expression, expressed in brain, and to a lesser extent in lung, kidney and testis.

The protein localises to the cytoplasm. It is found in the endosome. Its subcellular location is the cell junction. The protein resides in the membrane. The catalysed reaction is L-seryl-[protein] + ATP = O-phospho-L-seryl-[protein] + ADP + H(+). It catalyses the reaction L-threonyl-[protein] + ATP = O-phospho-L-threonyl-[protein] + ADP + H(+). With respect to regulation, atypical PKCs (PRKCI and PRKCZ) exhibit an elevated basal enzymatic activity (that may be due to the interaction with SMG1 or SQSTM1) and are not regulated by diacylglycerol, phosphatidylserine, phorbol esters or calcium ions. Two specific sites, Thr-410 (activation loop of the kinase domain) and Thr-560 (turn motif), need to be phosphorylated for its full activation. Phosphatidylinositol 3,4,5-trisphosphate might be a physiological activator. Isoform 2: Constitutively active. In terms of biological role, calcium- and diacylglycerol-independent serine/threonine-protein kinase that functions in phosphatidylinositol 3-kinase (PI3K) pathway and mitogen-activated protein (MAP) kinase cascade, and is involved in NF-kappa-B activation, mitogenic signaling, cell proliferation, cell polarity, inflammatory response and maintenance of long-term potentiation (LTP). Upon lipopolysaccharide (LPS) treatment in macrophages, or following mitogenic stimuli, functions downstream of PI3K to activate MAP2K1/MEK1-MAPK1/ERK2 signaling cascade independently of RAF1 activation. Required for insulin-dependent activation of AKT3, but may function as an adapter rather than a direct activator. Upon insulin treatment may act as a downstream effector of PI3K and contribute to the activation of translocation of the glucose transporter SLC2A4/GLUT4 and subsequent glucose transport in adipocytes. In EGF-induced cells, binds and activates MAP2K5/MEK5-MAPK7/ERK5 independently of its kinase activity and can activate JUN promoter through MEF2C. Through binding with SQSTM1/p62, functions in interleukin-1 signaling and activation of NF-kappa-B with the specific adapters RIPK1 and TRAF6. Participates in TNF-dependent transactivation of NF-kappa-B by phosphorylating and activating IKBKB kinase, which in turn leads to the degradation of NF-kappa-B inhibitors. In migrating astrocytes, forms a cytoplasmic complex with PARD6A and is recruited by CDC42 to function in the establishment of cell polarity along with the microtubule motor and dynein. In association with FEZ1, stimulates neuronal differentiation in PC12 cells. In the inflammatory response, is required for the T-helper 2 (Th2) differentiation process, including interleukin production, efficient activation of JAK1 and the subsequent phosphorylation and nuclear translocation of STAT6. May be involved in development of allergic airway inflammation (asthma), a process dependent on Th2 immune response. In the NF-kappa-B-mediated inflammatory response, can relieve SETD6-dependent repression of NF-kappa-B target genes by phosphorylating the RELA subunit at 'Ser-311'. Phosphorylates VAMP2 in vitro. Phosphorylates and activates LRRK1, which phosphorylates RAB proteins involved in intracellular trafficking. Functionally, involved in late synaptic long term potention phase in CA1 hippocampal cells and long term memory maintenance. This Homo sapiens (Human) protein is Protein kinase C zeta type (PRKCZ).